A 391-amino-acid polypeptide reads, in one-letter code: Ferrochelatase (391 aa).

Residues His-196 and Glu-281 each coordinate Fe cation.

The protein belongs to the ferrochelatase family.

It is found in the cytoplasm. It carries out the reaction heme b + 2 H(+) = protoporphyrin IX + Fe(2+). It participates in porphyrin-containing compound metabolism; protoheme biosynthesis; protoheme from protoporphyrin-IX: step 1/1. In terms of biological role, catalyzes the ferrous insertion into protoporphyrin IX. This is Ferrochelatase from Synechococcus sp. (strain WH7803).